A 224-amino-acid polypeptide reads, in one-letter code: Protein LURP-one-related 1 (224 aa).

The segment at 1 to 23 is disordered; the sequence is MQQPYEYRYPQGTGPSAPPPPPK.

Belongs to the LOR family.

In terms of biological role, might be related to the phospholipid scramblase and tubby-like superfamily of membrane tethered transcription factors. This chain is Protein LURP-one-related 1, found in Arabidopsis thaliana (Mouse-ear cress).